The following is a 390-amino-acid chain: GTPase Obg (390 aa).

An Obg domain is found at 1–159; sequence MKFVDEASIL…RELLLELMLL (159 aa). A disordered region spans residues 127–147; that stretch reads NTRFKSSVNRTPRQKTNGTPG. A compositionally biased stretch (polar residues) spans 129–145; it reads RFKSSVNRTPRQKTNGT. One can recognise an OBG-type G domain in the interval 160-333; it reads ADVGMLGMPN…LCWDVMTFII (174 aa). Residues 166–173, 191–195, 213–216, 283–286, and 314–316 each bind GTP; these read GMPNAGKS, FTTLV, DIPG, NKID, and SAA. Mg(2+) is bound by residues S173 and T193.

The protein belongs to the TRAFAC class OBG-HflX-like GTPase superfamily. OBG GTPase family. Monomer. Mg(2+) is required as a cofactor.

It is found in the cytoplasm. Its function is as follows. An essential GTPase which binds GTP, GDP and possibly (p)ppGpp with moderate affinity, with high nucleotide exchange rates and a fairly low GTP hydrolysis rate. Plays a role in control of the cell cycle, stress response, ribosome biogenesis and in those bacteria that undergo differentiation, in morphogenesis control. The sequence is that of GTPase Obg from Escherichia fergusonii (strain ATCC 35469 / DSM 13698 / CCUG 18766 / IAM 14443 / JCM 21226 / LMG 7866 / NBRC 102419 / NCTC 12128 / CDC 0568-73).